Consider the following 128-residue polypeptide: UPF0102 protein KPN78578_35270 (128 aa).

Residues 1 to 20 form a disordered region; it reads MAQVPAGKNRSGQLSKQTGD.

It belongs to the UPF0102 family.

This chain is UPF0102 protein KPN78578_35270, found in Klebsiella pneumoniae subsp. pneumoniae (strain ATCC 700721 / MGH 78578).